The primary structure comprises 99 residues: Cytochrome c2 iso-1 (99 aa).

Positions 10, 13, 14, and 75 each coordinate heme c.

Belongs to the cytochrome c family. Post-translationally, binds 1 heme c group covalently per subunit.

Cytochrome c2 is found mainly in purple, non-sulfur, photosynthetic bacteria where it functions as the electron donor to the oxidized bacteriochlorophyll in the photophosphorylation pathway. However, it may also have a role in the respiratory chain and is found in some non-photosynthetic bacteria. The polypeptide is Cytochrome c2 iso-1 (Magnetospirillum fulvum (Rhodospirillum fulvum)).